The chain runs to 392 residues: Protein NolC (392 aa).

One can recognise a J domain in the interval 2–71; the sequence is KRDLYETLGV…RAAYDRYGHA (70 aa). Disordered regions lie at residues 103–142 and 157–244; these read RRDD…QDGA and LGRE…TGLR. Residues 157–170 show a composition bias toward basic and acidic residues; it reads LGREAGHQPEDLRH. The span at 171–185 shows a compositional bias: low complexity; it reads LPGLRPYPRRPGLLL. A compositionally biased stretch (basic and acidic residues) spans 186 to 203; it reads DRTHLPDLRRSRSDDHRS. Basic residues predominate over residues 227 to 241; sequence HRGRHAYPPLRRGRT.

This chain is Protein NolC (nolC), found in Rhizobium fredii (Sinorhizobium fredii).